The primary structure comprises 589 residues: NADP-dependent malic enzyme (589 aa).

Catalysis depends on tyrosine 137, which acts as the Proton donor. Arginine 190 is a binding site for NAD(+). Residue lysine 208 is the Proton acceptor of the active site. Glutamate 280, aspartate 281, and aspartate 304 together coordinate a divalent metal cation. Residue aspartate 304 coordinates NAD(+). 333-349 (LFLGAGEAGTGIAELIA) provides a ligand contact to NADP(+). Asparagine 445 serves as a coordination point for NAD(+).

Belongs to the malic enzymes family. As to quaternary structure, homotetramer. Mg(2+) serves as cofactor. Requires Mn(2+) as cofactor.

Its subcellular location is the cytoplasm. The enzyme catalyses (S)-malate + NADP(+) = pyruvate + CO2 + NADPH. The catalysed reaction is oxaloacetate + H(+) = pyruvate + CO2. The polypeptide is NADP-dependent malic enzyme (ME1) (Phaseolus vulgaris (Kidney bean)).